The chain runs to 50 residues: Bacteriocin BacSp222 (50 aa).

Met-1 is modified (N-formylmethionine).

The protein resides in the secreted. Its function is as follows. Has bacteriolytic activity against Gram-positive bacteria B.subtilis, L.lactis and M.luteus and several species from genus Staphylococcus including methicillin-resistant S.aureus, with MIC values ranging from 0.11 uM to 7.8 uM. Has no activity against Gram-negative bacteria or fungi. In vitro, has a dose-dependent cytolytic effect on eukaryotic cells. In Staphylococcus pseudintermedius, this protein is Bacteriocin BacSp222.